The chain runs to 598 residues: Autophagy-related protein 22-1 (598 aa).

The tract at residues 1–20 is disordered; it reads MEDGGAGLRAPRYPAEDTSP. Residues 28–48 form a helical membrane-spanning segment; sequence GFFCYGLAAEVFAVCAVGSFL. N-linked (GlcNAc...) asparagine glycans are attached at residues Asn74 and Asn80. 3 helical membrane-spanning segments follow: residues 111-131, 159-179, and 182-202; these read SFAM…LVSV, FLLV…ICVV, and GCSF…HPVV. The interval 207-238 is disordered; the sequence is DHPTASSSIPLQPISPQRSSRKSEESLHQVNR. Low complexity predominate over residues 212–224; the sequence is SSSIPLQPISPQR. A compositionally biased stretch (basic and acidic residues) spans 227-238; the sequence is RKSEESLHQVNR. Residues 263 to 283 traverse the membrane as a helical segment; the sequence is VGIGYMAAVSVQVICILILYI. Asn285 carries N-linked (GlcNAc...) asparagine glycosylation. Helical transmembrane passes span 297 to 317, 363 to 383, 400 to 420, 431 to 451, 465 to 485, 489 to 509, and 534 to 554; these read TVLF…VMWL, VLLF…ISAT, ALLS…WPII, IIVC…LGFL, WYEI…LSSY, FYGL…FAIT, and AFGF…MVDV. The tract at residues 575-598 is disordered; it reads HEDFESFEGSSDGHEAEGLMRDHD. Residues 585-598 show a composition bias toward basic and acidic residues; sequence SDGHEAEGLMRDHD.

Belongs to the ATG22 family.

It localises to the vacuole membrane. In terms of biological role, vacuolar effluxer which mediate the efflux of amino acids resulting from autophagic degradation. The release of autophagic amino acids allows the maintenance of protein synthesis and viability during nitrogen starvation. The polypeptide is Autophagy-related protein 22-1 (atg22-1) (Sclerotinia sclerotiorum (strain ATCC 18683 / 1980 / Ss-1) (White mold)).